Reading from the N-terminus, the 269-residue chain is Phosphate import ATP-binding protein PstB (269 aa).

In terms of domain architecture, ABC transporter spans 21-264; sequence IEIKDFNFFY…PKDRRTENYI (244 aa). An ATP-binding site is contributed by 55–62; sequence GPSGCGKT.

It belongs to the ABC transporter superfamily. Phosphate importer (TC 3.A.1.7) family. The complex is composed of two ATP-binding proteins (PstB), two transmembrane proteins (PstC and PstA) and a solute-binding protein (PstS).

Its subcellular location is the cell membrane. It catalyses the reaction phosphate(out) + ATP + H2O = ADP + 2 phosphate(in) + H(+). Its function is as follows. Part of the ABC transporter complex PstSACB involved in phosphate import. Responsible for energy coupling to the transport system. This is Phosphate import ATP-binding protein PstB from Mycoplasma capricolum subsp. capricolum (strain California kid / ATCC 27343 / NCTC 10154).